Consider the following 348-residue polypeptide: 4-hydroxy-2-oxovalerate aldolase (348 aa).

Residues 9-261 (ITVHDMTLRD…RTGVDVWKIQ (253 aa)) form the Pyruvate carboxyltransferase domain. 17 to 18 (RD) provides a ligand contact to substrate. Asp-18 provides a ligand contact to Mn(2+). The active-site Proton acceptor is the His-21. Residues Ser-171 and His-200 each contribute to the substrate site. Residues His-200 and His-202 each contribute to the Mn(2+) site. Tyr-291 provides a ligand contact to substrate.

It belongs to the 4-hydroxy-2-oxovalerate aldolase family.

It carries out the reaction (S)-4-hydroxy-2-oxopentanoate = acetaldehyde + pyruvate. This Ralstonia pickettii (strain 12J) protein is 4-hydroxy-2-oxovalerate aldolase.